Here is a 127-residue protein sequence, read N- to C-terminus: Thioredoxin-3, mitochondrial (127 aa).

The N-terminal 21 residues, 1–21 (MLFYKPVMRMAVRPLKSIRFQ), are a transit peptide targeting the mitochondrion. A Thioredoxin domain is found at 22–127 (SSYTSITKLT…TALEKGIKDL (106 aa)). Residues Cys55 and Cys58 each act as nucleophile in the active site. A disulfide bond links Cys55 and Cys58.

Belongs to the thioredoxin family.

It localises to the mitochondrion. The sequence is that of Thioredoxin-3, mitochondrial (TRX3) from Saccharomyces cerevisiae (strain ATCC 204508 / S288c) (Baker's yeast).